Here is a 198-residue protein sequence, read N- to C-terminus: Phycocyanobilin lyase CpcT homolog (198 aa).

This sequence belongs to the CpcT/CpeT biliprotein lyase family.

Covalently attaches a chromophore to Cys residue(s) of phycobiliproteins. In vitro is not seen to act as a chromophore lyase for ApcA1, ApcA2, ApcB, ApcD, ApcF, CpcB or PecB, the lyase activity is therefore unsure. This Nostoc sp. (strain PCC 7120 / SAG 25.82 / UTEX 2576) protein is Phycocyanobilin lyase CpcT homolog (cpcT2).